The chain runs to 519 residues: 2-isopropylmalate synthase (519 aa).

Positions 12 to 274 (IRIFDTTLRD…DTSIHTSRIV (263 aa)) constitute a Pyruvate carboxyltransferase domain. Mn(2+)-binding residues include Asp21, His209, His211, and Asn245. Residues 396–519 (RLASMTISDV…MQNKQNTALA (124 aa)) are regulatory domain.

The protein belongs to the alpha-IPM synthase/homocitrate synthase family. LeuA type 1 subfamily. Homodimer. Mn(2+) is required as a cofactor.

The protein localises to the cytoplasm. It carries out the reaction 3-methyl-2-oxobutanoate + acetyl-CoA + H2O = (2S)-2-isopropylmalate + CoA + H(+). It functions in the pathway amino-acid biosynthesis; L-leucine biosynthesis; L-leucine from 3-methyl-2-oxobutanoate: step 1/4. Its function is as follows. Catalyzes the condensation of the acetyl group of acetyl-CoA with 3-methyl-2-oxobutanoate (2-ketoisovalerate) to form 3-carboxy-3-hydroxy-4-methylpentanoate (2-isopropylmalate). This chain is 2-isopropylmalate synthase, found in Xylella fastidiosa (strain M23).